A 237-amino-acid polypeptide reads, in one-letter code: Class B acid phosphatase (237 aa).

Residues methionine 1–alanine 23 form the signal peptide. Aspartate 69 (nucleophile) is an active-site residue. 2 residues coordinate Mg(2+): aspartate 69 and aspartate 71. Aspartate 71 functions as the Proton donor in the catalytic mechanism. Residues threonine 137–glycine 138 and lysine 177 each bind substrate. Aspartate 192 is a Mg(2+) binding site.

This sequence belongs to the class B bacterial acid phosphatase family. As to quaternary structure, homotetramer. It depends on Mg(2+) as a cofactor.

The protein resides in the periplasm. The catalysed reaction is a phosphate monoester + H2O = an alcohol + phosphate. Dephosphorylates several organic phosphate monoesters. Also has a phosphotransferase activity catalyzing the transfer of low-energy phosphate groups from organic phosphate monoesters to free hydroxyl groups of various organic compounds. The polypeptide is Class B acid phosphatase (Rahnella sp. (strain Y9602)).